Consider the following 783-residue polypeptide: Probable phosphoketolase (783 aa).

Belongs to the XFP family. Thiamine diphosphate serves as cofactor.

This chain is Probable phosphoketolase, found in Rhodopseudomonas palustris (strain ATCC BAA-98 / CGA009).